A 180-amino-acid polypeptide reads, in one-letter code: Adipocyte-related X-chromosome expressed sequence 1 (180 aa).

At 1-11 the chain is on the cytoplasmic side; that stretch reads MNSLLSRANSL. The helical; Signal-anchor for type II membrane protein transmembrane segment at 12-32 threads the bilayer; that stretch reads FAFTLSVMAALTLGCILTTAF. Residues 33 to 180 lie on the Lumenal side of the membrane; sequence KDRSAPVRLH…PDSYEIATTF (148 aa). N-linked (GlcNAc...) asparagine glycosylation is present at Asn-141.

This sequence belongs to the SPCS3 family. In terms of tissue distribution, strongly expressed in epididymal white and brown adipose tissue with low levels in heart.

It is found in the endoplasmic reticulum membrane. Plays a role in adipogenesis. This Mus musculus (Mouse) protein is Adipocyte-related X-chromosome expressed sequence 1.